The sequence spans 425 residues: Tol-Pal system protein TolB (425 aa).

A signal peptide spans 1–23 (MQMMKKRILLCLLVGMTCLPVLA).

The protein belongs to the TolB family. As to quaternary structure, the Tol-Pal system is composed of five core proteins: the inner membrane proteins TolA, TolQ and TolR, the periplasmic protein TolB and the outer membrane protein Pal. They form a network linking the inner and outer membranes and the peptidoglycan layer.

The protein localises to the periplasm. Functionally, part of the Tol-Pal system, which plays a role in outer membrane invagination during cell division and is important for maintaining outer membrane integrity. This Albidiferax ferrireducens (strain ATCC BAA-621 / DSM 15236 / T118) (Rhodoferax ferrireducens) protein is Tol-Pal system protein TolB.